The sequence spans 169 residues: Cell division protein B3 (169 aa).

Its function is as follows. Part of a cell division machinery. May fulfill a coordination function between the Cdv proteins during cell division. This is Cell division protein B3 from Sulfolobus acidocaldarius (strain ATCC 33909 / DSM 639 / JCM 8929 / NBRC 15157 / NCIMB 11770).